A 107-amino-acid chain; its full sequence is Flagellar transcriptional regulator FlhD (107 aa).

This sequence belongs to the FlhD family. In terms of assembly, homodimer; disulfide-linked. Forms a heterohexamer composed of two FlhC and four FlhD subunits. Each FlhC binds a FlhD dimer, forming a heterotrimer, and a hexamer assembles by dimerization of two heterotrimers.

It is found in the cytoplasm. Its function is as follows. Functions in complex with FlhC as a master transcriptional regulator that regulates transcription of several flagellar and non-flagellar operons by binding to their promoter region. Activates expression of class 2 flagellar genes, including fliA, which is a flagellum-specific sigma factor that turns on the class 3 genes. Also regulates genes whose products function in a variety of physiological pathways. This Bordetella bronchiseptica (strain ATCC BAA-588 / NCTC 13252 / RB50) (Alcaligenes bronchisepticus) protein is Flagellar transcriptional regulator FlhD.